Here is a 325-residue protein sequence, read N- to C-terminus: Inner membrane protein YrbG (325 aa).

Over 1-5 the chain is Periplasmic; sequence MLLAT. A helical transmembrane segment spans residues 6–26; it reads ALLIVGLLLVVYSADRLVFAA. Topologically, residues 27–37 are cytoplasmic; the sequence is SILCRTFGIPP. The chain crosses the membrane as a helical span at residues 38–58; that stretch reads LIIGMTVVSIGTSLPEVIVSL. The Periplasmic segment spans residues 59 to 67; that stretch reads AASLHEQRD. A helical membrane pass occupies residues 68 to 88; sequence LAVGTALGSNIINILLILGLA. Residues 89 to 104 lie on the Cytoplasmic side of the membrane; it reads ALVRPFTVHSDVLRRE. Residues 105–125 traverse the membrane as a helical segment; that stretch reads LPLMLLVSVVAGSVLYDGQLS. A topological domain (periplasmic) is located at residue Arg126. The helical transmembrane segment at 127 to 147 threads the bilayer; it reads SDGIFLLFLAVLWLLFIVKLA. Topologically, residues 148-169 are cytoplasmic; the sequence is RQAERQGTDSLTREQLAELPRD. The helical transmembrane segment at 170–190 threads the bilayer; that stretch reads GGLPVAFLWLGIALIIMPVAT. The Periplasmic portion of the chain corresponds to 191–198; sequence RMVVDNAT. Residues 199-219 form a helical membrane-spanning segment; it reads VLANYFAISELTMGLTAIAIG. Residues 220–243 are Cytoplasmic-facing; sequence TSLPELATAIAGVRKGENDIAVGN. Residues 244–264 form a helical membrane-spanning segment; it reads IIGANIFNIVIVLGLPALITP. Topologically, residues 265–269 are periplasmic; the sequence is GEIDP. Residues 270-290 traverse the membrane as a helical segment; it reads LAYSRDYSVMLLVSIIFALLC. Topologically, residues 291 to 302 are cytoplasmic; sequence WRRSPQPGRGVG. The helical transmembrane segment at 303–323 threads the bilayer; it reads VLLTGGFIVWLAMLYWLSPIL. Residues 324–325 lie on the Periplasmic side of the membrane; the sequence is VE.

The protein belongs to the Ca(2+):cation antiporter (CaCA) (TC 2.A.19) family.

The protein localises to the cell inner membrane. The chain is Inner membrane protein YrbG (yrbG) from Escherichia coli (strain K12).